The following is a 1179-amino-acid chain: Integrin alpha-1 (1179 aa).

The N-terminal stretch at 1–28 (MVPRRPASLEVTVACIWLLTVILGVCIS) is a signal peptide. Over 29 to 1141 (FNVDVKNSMS…SKDGLPGRVP (1113 aa)) the chain is Extracellular. One copy of the FG-GAP 1 repeat lies at 30–91 (NVDVKNSMSF…CPVGRERSMP (62 aa)). Cysteine 82 and cysteine 92 are oxidised to a cystine. Asparagine 100, asparagine 105, asparagine 112, asparagine 217, asparagine 317, asparagine 341, asparagine 402, asparagine 418, and asparagine 459 each carry an N-linked (GlcNAc...) asparagine glycan. The FG-GAP 2 repeat unit spans residues 101–160 (TSIPNVTEIKENMTFGSTLVTNPKGGFLACGPLYAYRCGHLHYTTGICSDVSPTFQVVNS). The region spanning 175 to 364 (IVLDGSNSIY…LGERIFALEA (190 aa)) is the VWFA domain. Residues 365 to 417 (TADQSAASFEMEMSQTGFSAHYSQDWVMLGAVGAYDWNGTVVMQKANQIVIPH) form an FG-GAP 3 repeat. 4 FG-GAP repeats span residues 422–474 (QTEP…DGDV), 475–537 (NILQ…RFEY), 556–614 (SCTK…TIRK), and 618–678 (QRIP…FEPN). Residues aspartate 497, aspartate 499, aspartate 501, and aspartate 505 each contribute to the Ca(2+) site. Residue asparagine 531 is glycosylated (N-linked (GlcNAc...) asparagine). Ca(2+)-binding residues include aspartate 579, asparagine 581, aspartate 583, aspartate 587, aspartate 641, asparagine 643, aspartate 645, and aspartate 649. Cysteines 687 and 696 form a disulfide. 3 N-linked (GlcNAc...) asparagine glycosylation sites follow: asparagine 698, asparagine 747, and asparagine 779. A disulfide bridge links cysteine 702 with cysteine 755. Cysteine 807 and cysteine 813 are oxidised to a cystine. 7 N-linked (GlcNAc...) asparagine glycosylation sites follow: asparagine 839, asparagine 882, asparagine 907, asparagine 938, asparagine 965, asparagine 973, and asparagine 1007. The cysteines at positions 877 and 885 are disulfide-linked. 2 disulfides stabilise this stretch: cysteine 1029–cysteine 1062 and cysteine 1065–cysteine 1072. 3 N-linked (GlcNAc...) asparagine glycosylation sites follow: asparagine 1083, asparagine 1102, and asparagine 1113. Residues 1142-1164 (LWVILLSAFAGLLLLMLLILALW) traverse the membrane as a helical segment. The Cytoplasmic segment spans residues 1165 to 1179 (KIGFFKRPLKKKMEK). The GFFKR motif signature appears at 1167 to 1171 (GFFKR).

Belongs to the integrin alpha chain family. As to quaternary structure, heterodimer of an alpha and a beta subunit. Alpha-1 associates with beta-1. Interacts with RAB21. Interacts (via cytoplasmic domain) with PTPN2; activates PTPN2 phosphatase activity towards EGFR and negatively regulates EGF signaling.

It is found in the membrane. Functionally, integrin alpha-1/beta-1 is a receptor for laminin and collagen. It recognizes the proline-hydroxylated sequence G-F-P-G-E-R in collagen. Involved in anchorage-dependent, negative regulation of EGF-stimulated cell growth. In Mus musculus (Mouse), this protein is Integrin alpha-1 (Itga1).